We begin with the raw amino-acid sequence, 395 residues long: NAD(P)H-quinone oxidoreductase subunit H, chloroplastic (395 aa).

Belongs to the complex I 49 kDa subunit family. As to quaternary structure, NDH is composed of at least 16 different subunits, 5 of which are encoded in the nucleus.

It localises to the plastid. The protein localises to the chloroplast thylakoid membrane. The enzyme catalyses a plastoquinone + NADH + (n+1) H(+)(in) = a plastoquinol + NAD(+) + n H(+)(out). It carries out the reaction a plastoquinone + NADPH + (n+1) H(+)(in) = a plastoquinol + NADP(+) + n H(+)(out). Its function is as follows. NDH shuttles electrons from NAD(P)H:plastoquinone, via FMN and iron-sulfur (Fe-S) centers, to quinones in the photosynthetic chain and possibly in a chloroplast respiratory chain. The immediate electron acceptor for the enzyme in this species is believed to be plastoquinone. Couples the redox reaction to proton translocation, and thus conserves the redox energy in a proton gradient. The chain is NAD(P)H-quinone oxidoreductase subunit H, chloroplastic from Staurastrum punctulatum (Green alga).